Here is a 197-residue protein sequence, read N- to C-terminus: Holliday junction branch migration complex subunit RuvA (197 aa).

The domain I stretch occupies residues 1 to 63 (MYDYIKGNLT…EDAHLLYGFH (63 aa)). Residues 64-142 (TEDEKAVFLN…DINEVSTDKS (79 aa)) are domain II. The segment at 143–147 (KVSTI) is flexible linker. The domain III stretch occupies residues 148 to 197 (NNNQELEEAVEALLALGYKTNELKKIEKFFEGTTDTAENYIKSALKMLMK).

The protein belongs to the RuvA family. In terms of assembly, homotetramer. Forms an RuvA(8)-RuvB(12)-Holliday junction (HJ) complex. HJ DNA is sandwiched between 2 RuvA tetramers; dsDNA enters through RuvA and exits via RuvB. An RuvB hexamer assembles on each DNA strand where it exits the tetramer. Each RuvB hexamer is contacted by two RuvA subunits (via domain III) on 2 adjacent RuvB subunits; this complex drives branch migration. In the full resolvosome a probable DNA-RuvA(4)-RuvB(12)-RuvC(2) complex forms which resolves the HJ.

It localises to the cytoplasm. Functionally, the RuvA-RuvB-RuvC complex processes Holliday junction (HJ) DNA during genetic recombination and DNA repair, while the RuvA-RuvB complex plays an important role in the rescue of blocked DNA replication forks via replication fork reversal (RFR). RuvA specifically binds to HJ cruciform DNA, conferring on it an open structure. The RuvB hexamer acts as an ATP-dependent pump, pulling dsDNA into and through the RuvAB complex. HJ branch migration allows RuvC to scan DNA until it finds its consensus sequence, where it cleaves and resolves the cruciform DNA. In Streptococcus mutans serotype c (strain ATCC 700610 / UA159), this protein is Holliday junction branch migration complex subunit RuvA.